The primary structure comprises 85 residues: ATP synthase subunit c (85 aa).

The next 2 membrane-spanning stretches (helical) occupy residues 10 to 30 (IAVA…FAIL) and 53 to 73 (FIVA…ALFF).

The protein belongs to the ATPase C chain family. F-type ATPases have 2 components, F(1) - the catalytic core - and F(0) - the membrane proton channel. F(1) has five subunits: alpha(3), beta(3), gamma(1), delta(1), epsilon(1). F(0) has three main subunits: a(1), b(2) and c(10-14). The alpha and beta chains form an alternating ring which encloses part of the gamma chain. F(1) is attached to F(0) by a central stalk formed by the gamma and epsilon chains, while a peripheral stalk is formed by the delta and b chains.

The protein resides in the cell inner membrane. Functionally, f(1)F(0) ATP synthase produces ATP from ADP in the presence of a proton or sodium gradient. F-type ATPases consist of two structural domains, F(1) containing the extramembraneous catalytic core and F(0) containing the membrane proton channel, linked together by a central stalk and a peripheral stalk. During catalysis, ATP synthesis in the catalytic domain of F(1) is coupled via a rotary mechanism of the central stalk subunits to proton translocation. Key component of the F(0) channel; it plays a direct role in translocation across the membrane. A homomeric c-ring of between 10-14 subunits forms the central stalk rotor element with the F(1) delta and epsilon subunits. The polypeptide is ATP synthase subunit c (Shewanella halifaxensis (strain HAW-EB4)).